The primary structure comprises 132 residues: AP-2 complex subunit sigma (132 aa).

The protein belongs to the adaptor complexes small subunit family. As to quaternary structure, adaptor protein complex 2 (AP-2) is a heterotetramer composed of two large adaptins (alpha-type and beta-type subunits), a medium adaptin (mu-type subunit AP50) and a small adaptin (sigma-type subunit AP17). In terms of tissue distribution, widely expressed in the embryo, endosperm, leaf and root.

It is found in the cell membrane. The protein resides in the membrane. It localises to the coated pit. Functionally, component of the adaptor complexes which link clathrin to receptors in coated vesicles. Clathrin-associated protein complexes are believed to interact with the cytoplasmic tails of membrane proteins, leading to their selection and concentration. AP2S1/AP17 is a subunit of the plasma membrane adaptor. The complex binds polyphosphoinositides. This Zea mays (Maize) protein is AP-2 complex subunit sigma (AP-17).